Reading from the N-terminus, the 32-residue chain is Yop proteins translocation protein A (32 aa).

This chain is Yop proteins translocation protein A (yscA), found in Yersinia enterocolitica serotype O:8 / biotype 1B (strain NCTC 13174 / 8081).